We begin with the raw amino-acid sequence, 34 residues long: Peptide 9797 (34 aa).

As to expression, expressed by the venom gland.

The protein resides in the secreted. The sequence is that of Peptide 9797 from Tityus stigmurus (Brazilian scorpion).